The primary structure comprises 305 residues: N-acetyl-D-glucosamine kinase (305 aa).

ATP-binding positions include 4-11 and 133-140; these read GFDIGGTK and GFGGGLVF. Positions 157, 178, 180, and 185 each coordinate Zn(2+).

The protein belongs to the ROK (NagC/XylR) family. NagK subfamily.

It carries out the reaction N-acetyl-D-glucosamine + ATP = N-acetyl-D-glucosamine 6-phosphate + ADP + H(+). It participates in cell wall biogenesis; peptidoglycan recycling. Catalyzes the phosphorylation of N-acetyl-D-glucosamine (GlcNAc) derived from cell-wall degradation, yielding GlcNAc-6-P. The sequence is that of N-acetyl-D-glucosamine kinase from Histophilus somni (strain 129Pt) (Haemophilus somnus).